Reading from the N-terminus, the 997-residue chain is Protein translocase subunit SecA (997 aa).

ATP contacts are provided by residues Gln-84, 102–106 (GEGKT), and Asp-582. The tract at residues 950–997 (PYVPVPEAKPEPSEVFGVERKRATPPPQPGLSRAERRRLMRQEKKRKK) is disordered. The segment covering 957-971 (AKPEPSEVFGVERKR) has biased composition (basic and acidic residues). Basic residues predominate over residues 984-997 (ERRRLMRQEKKRKK).

Belongs to the SecA family. As to quaternary structure, part of the essential Sec protein translocation apparatus which comprises SecA, SecYEG and auxiliary proteins SecDF. Other proteins may also be involved. Monomer and homodimer.

The protein resides in the cell inner membrane. Its subcellular location is the cytoplasm. The enzyme catalyses ATP + H2O + cellular proteinSide 1 = ADP + phosphate + cellular proteinSide 2.. Functionally, part of the Sec protein translocase complex. Interacts with the SecYEG preprotein conducting channel. Has a central role in coupling the hydrolysis of ATP to the transfer of proteins into and across the cell membrane, serving as an ATP-driven molecular motor driving the stepwise translocation of polypeptide chains across the membrane. This Thermus thermophilus (strain ATCC 27634 / DSM 579 / HB8) protein is Protein translocase subunit SecA.